Consider the following 155-residue polypeptide: Small ribosomal subunit protein uS7c (155 aa).

Belongs to the universal ribosomal protein uS7 family. As to quaternary structure, part of the 30S ribosomal subunit.

Its subcellular location is the plastid. One of the primary rRNA binding proteins, it binds directly to 16S rRNA where it nucleates assembly of the head domain of the 30S subunit. This Lathraea clandestina (Purple toothwort) protein is Small ribosomal subunit protein uS7c (rps7).